A 136-amino-acid polypeptide reads, in one-letter code: Piercer of microtubule wall 1 protein (136 aa).

Residues 1–24 (MAEECPRACAEPVAPKATAPPERT) form a disordered region.

This sequence belongs to the PIERCE1 family. Microtubule inner protein component of sperm flagellar doublet microtubules. Interacts with CFAP53, ODAD1 and ODAD3; the interactions link the outer dynein arms docking complex (ODA-DC) to the internal microtubule inner proteins (MIP) in cilium axoneme. In terms of tissue distribution, expressed in airway epithelial cells.

The protein resides in the cytoplasm. Its subcellular location is the cytoskeleton. It is found in the cilium axoneme. It localises to the flagellum axoneme. Microtubule inner protein involved in the attachment of outer dynein arms (ODAs) to dynein-decorated doublet microtubules (DMTs) in cilia axoneme, which is required for motile cilia beating. Functions at the initial step of left-right asymmetry specification of the visceral organs. This chain is Piercer of microtubule wall 1 protein, found in Homo sapiens (Human).